A 198-amino-acid chain; its full sequence is Pyridoxal 5'-phosphate synthase subunit PdxT (198 aa).

50–52 (GES) contributes to the L-glutamine binding site. Catalysis depends on C82, which acts as the Nucleophile. L-glutamine contacts are provided by residues R111 and 140–141 (IR). Active-site charge relay system residues include H177 and E179.

Belongs to the glutaminase PdxT/SNO family. As to quaternary structure, in the presence of PdxS, forms a dodecamer of heterodimers. Only shows activity in the heterodimer.

The catalysed reaction is aldehydo-D-ribose 5-phosphate + D-glyceraldehyde 3-phosphate + L-glutamine = pyridoxal 5'-phosphate + L-glutamate + phosphate + 3 H2O + H(+). It catalyses the reaction L-glutamine + H2O = L-glutamate + NH4(+). It participates in cofactor biosynthesis; pyridoxal 5'-phosphate biosynthesis. Its function is as follows. Catalyzes the hydrolysis of glutamine to glutamate and ammonia as part of the biosynthesis of pyridoxal 5'-phosphate. The resulting ammonia molecule is channeled to the active site of PdxS. The chain is Pyridoxal 5'-phosphate synthase subunit PdxT from Leifsonia xyli subsp. xyli (strain CTCB07).